The chain runs to 424 residues: Gamma-glutamyl phosphate reductase (424 aa).

Belongs to the gamma-glutamyl phosphate reductase family.

The protein localises to the cytoplasm. The catalysed reaction is L-glutamate 5-semialdehyde + phosphate + NADP(+) = L-glutamyl 5-phosphate + NADPH + H(+). The protein operates within amino-acid biosynthesis; L-proline biosynthesis; L-glutamate 5-semialdehyde from L-glutamate: step 2/2. Its function is as follows. Catalyzes the NADPH-dependent reduction of L-glutamate 5-phosphate into L-glutamate 5-semialdehyde and phosphate. The product spontaneously undergoes cyclization to form 1-pyrroline-5-carboxylate. This chain is Gamma-glutamyl phosphate reductase, found in Parvibaculum lavamentivorans (strain DS-1 / DSM 13023 / NCIMB 13966).